We begin with the raw amino-acid sequence, 371 residues long: Interstrand DNA cross-link repair glycosylase (371 aa).

The QXQ; important for activity signature appears at 37 to 39 (QAQ).

It belongs to the DNA glycosylase AlkZ-like family.

Functionally, DNA glycosylase involved in the repair of interstrand DNA cross-links (ICLs), which are highly toxic DNA lesions that covalently tether the opposing strands of DNA, thereby inhibiting essential cellular processes such as DNA replication and transcription. Acts by unhooking both sides of the ICLs, forming abasic (AP) sites on both strands. AlkZ specifically repairs DNA damage induced by azinomycin B (AZB), a natural product with potent antibiotic and antitumor activities that interacts covalently with duplex DNA and forms ICLs. AlkZ thus confers self-resistance to azinomycin B, which is produced by S.sahachiroi. It may also protect target sites by protein-DNA interaction. Binds sequence non-specifically to native DNA and structure-specifically to azinomycin B-modified sites, with higher affinity to azinomycin B-modified sites and lower affinity to native DNA duplex. In vitro, also acts on monoadducts and can catalyze the excision of N7-methylguanine (7mGua) from an oligonucleotide containing N7-methyldeoxyguanosine (d7mG). Is a monofunctional DNA glycosylase that does not have lyase activity. The protein is Interstrand DNA cross-link repair glycosylase of Streptomyces sahachiroi.